Here is a 566-residue protein sequence, read N- to C-terminus: KsdD-like steroid dehydrogenase Rv0785 (566 aa).

Residue 23 to 54 (DAIVVGAGLAGLVAACELADRGLRVLILDQEN) participates in FAD binding.

Belongs to the FAD-dependent oxidoreductase 2 family. Requires FAD as cofactor.

The protein operates within lipid metabolism; steroid biosynthesis. In terms of biological role, able to catalyze the elimination of the C-1 and C-2 hydrogen atoms of the A-ring from the polycyclic ring structure of 3-ketosteroids. This is KsdD-like steroid dehydrogenase Rv0785 from Mycobacterium tuberculosis (strain ATCC 25618 / H37Rv).